The sequence spans 104 residues: Small ribosomal subunit protein uS10 (104 aa).

This sequence belongs to the universal ribosomal protein uS10 family. Part of the 30S ribosomal subunit.

Its function is as follows. Involved in the binding of tRNA to the ribosomes. This chain is Small ribosomal subunit protein uS10, found in Hydrogenobaculum sp. (strain Y04AAS1).